A 545-amino-acid polypeptide reads, in one-letter code: E3 ubiquitin-protein ligase ipaH9.8 (545 aa).

Residues 1 to 242 (MLPINNNFSL…YHGPRIYFSM (242 aa)) form an interaction with target proteins region. LRR repeat units follow at residues 57-77 (NSDELRLDRLNLSSLPDNLPA), 78-99 (QITLLNVSYNQLTNLPELPVTL), 100-117 (KKLYSASNKLSELPVLPP), 118-139 (ALESLQVQHNELENLPALPDSL), 140-157 (LTMNISYNEIVSLPSLPL), 158-179 (ALKNLRATRNFLTELPAFSEGN), 182-203 (VVREYFFDRNQISHIPESILNL), and 205-228 (NECSIHISDNPLSSHALQALQRLT). The segment at 243-250 (SDGQQNTL) is linker. Residues 251–545 (HRPLADAVTA…SENGSQLHHS (295 aa)) are E3 ubiquitin-protein ligase catalytic domain. An NEL domain is found at 253–545 (PLADAVTAWF…SENGSQLHHS (293 aa)). Catalysis depends on Cys-337, which acts as the Glycyl thioester intermediate.

It belongs to the LRR-containing bacterial E3 ligase family. In terms of assembly, also interacts with human and mouse U2AF1 (U2AF35). Post-translationally, ubiquitinated in the presence of host E1 ubiquitin-activating enzyme, E2 ubiquitin-conjugating enzyme and ubiquitin.

The protein resides in the secreted. The protein localises to the host cytoplasm. Its subcellular location is the host nucleus. The enzyme catalyses S-ubiquitinyl-[E2 ubiquitin-conjugating enzyme]-L-cysteine + [acceptor protein]-L-lysine = [E2 ubiquitin-conjugating enzyme]-L-cysteine + N(6)-ubiquitinyl-[acceptor protein]-L-lysine.. With respect to regulation, exists in an autoinhibited state in the absence of substrate protein, due to interactions of the leucine-rich repeats with NEL domain. Is activated upon binding to a substrate protein. In terms of biological role, effector E3 ubiquitin ligase that interferes with host's ubiquitination pathway and modulates the acute inflammatory responses, thus facilitating bacterial colonization within the host cell. Interacts with IKBKG (NEMO) and TNIP1 (ABIN-1), a ubiquitin-binding adapter protein, which results in TNIP1-dependent 'Lys-27'-linked polyubiquitination of IKBKG. Consequently, polyubiquitinated IKBKG undergoes proteasome-dependent degradation, which perturbs NF-kappa-B activation during bacterial infection. Mediates polyubiquitination of host U2AF1, leading to its proteasomal degradation. Catalyzes 'Lys-48'-linked polyubiquitination and subsequent degradation of a subset of host guanylate-binding proteins (GBP1, GBP2, GBP4 and GBP6), thereby suppressing host cell defense. In contrast, host GBP3 and GBP7 are not ubiquitinated by IpaH9.8. Uses UBE2D2 (UBCH5B) as an E2 ubiquitin-conjugating enzyme. The sequence is that of E3 ubiquitin-protein ligase ipaH9.8 (ipaH9.8) from Shigella boydii serotype 4 (strain Sb227).